Here is an 86-residue protein sequence, read N- to C-terminus: UPF0473 protein Clos_1662 (86 aa).

Belongs to the UPF0473 family.

The chain is UPF0473 protein Clos_1662 from Alkaliphilus oremlandii (strain OhILAs) (Clostridium oremlandii (strain OhILAs)).